The following is a 220-amino-acid chain: Ribose-5-phosphate isomerase A (220 aa).

Substrate is bound by residues 28 to 31, 81 to 84, and 94 to 97; these read TGST, DGAD, and KGGG. Glutamate 103 (proton acceptor) is an active-site residue. Residue lysine 121 coordinates substrate.

Belongs to the ribose 5-phosphate isomerase family. Homodimer.

The enzyme catalyses aldehydo-D-ribose 5-phosphate = D-ribulose 5-phosphate. Its pathway is carbohydrate degradation; pentose phosphate pathway; D-ribose 5-phosphate from D-ribulose 5-phosphate (non-oxidative stage): step 1/1. Functionally, catalyzes the reversible conversion of ribose-5-phosphate to ribulose 5-phosphate. The polypeptide is Ribose-5-phosphate isomerase A (Shewanella baltica (strain OS185)).